Consider the following 362-residue polypeptide: Epoxyqueuosine reductase (362 aa).

Asp-143 functions as the Proton donor in the catalytic mechanism. In terms of domain architecture, 4Fe-4S ferredoxin-type spans 191–220 (PDSPKHQDSCGKCQACIKLCPTGAIQPGKM). 8 residues coordinate [4Fe-4S] cluster: Cys-200, Cys-203, Cys-206, Cys-210, Cys-226, Cys-253, Cys-256, and Cys-260.

Belongs to the QueG family. As to quaternary structure, monomer. The cofactor is cob(II)alamin. [4Fe-4S] cluster serves as cofactor.

It is found in the cytoplasm. The enzyme catalyses epoxyqueuosine(34) in tRNA + AH2 = queuosine(34) in tRNA + A + H2O. It functions in the pathway tRNA modification; tRNA-queuosine biosynthesis. In terms of biological role, catalyzes the conversion of epoxyqueuosine (oQ) to queuosine (Q), which is a hypermodified base found in the wobble positions of tRNA(Asp), tRNA(Asn), tRNA(His) and tRNA(Tyr). This is Epoxyqueuosine reductase from Francisella cf. novicida (strain Fx1).